We begin with the raw amino-acid sequence, 850 residues long: AdoMet-dependent rRNA methyltransferase SPB1 (850 aa).

G58, W60, D78, D94, and D119 together coordinate S-adenosyl-L-methionine. K159 (proton acceptor) is an active-site residue. Residues 273–282 are compositionally biased toward polar residues; it reads GETNEMTWTP. 4 disordered regions span residues 273–305, 388–414, 529–569, and 620–646; these read GETN…ARDE, IDKE…NEMK, GISD…RTLN, and AKKN…KQDD. Basic and acidic residues predominate over residues 388–400; it reads IDKELSELGEREK. Residues 397-425 are a coiled coil; sequence EREKARKKRERRRRNEMKQREIQRMQMNM. Residues 401 to 411 are compositionally biased toward basic residues; sequence ARKKRERRRRN. Composition is skewed to acidic residues over residues 537–561 and 628–638; these read DESD…DEDD and SDSEDEEDDIV. The stretch at 746–773 forms a coiled coil; it reads LEAKGRKKMRALRRLEQMKKKSELINED. The tract at residues 811–850 is disordered; the sequence is KNKGIAGRPRGVTGKYKMVDGTMKKEQRAIRRIKKKMGKK. Residues 840–850 show a composition bias toward basic residues; it reads IRRIKKKMGKK.

This sequence belongs to the class I-like SAM-binding methyltransferase superfamily. RNA methyltransferase RlmE family. SPB1 subfamily. As to quaternary structure, component of the nucleolar and nucleoplasmic pre-60S ribosomal particle.

The protein resides in the nucleus. It is found in the nucleolus. It carries out the reaction a ribonucleotide in rRNA + S-adenosyl-L-methionine = a 2'-O-methylribonucleotide in rRNA + S-adenosyl-L-homocysteine + H(+). Functionally, required for proper assembly of pre-ribosomal particles during the biogenesis of the 60S ribosomal subunit. The chain is AdoMet-dependent rRNA methyltransferase SPB1 from Yarrowia lipolytica (strain CLIB 122 / E 150) (Yeast).